A 1233-amino-acid chain; its full sequence is Mitogen-activated protein kinase kinase kinase kinase 4 (1233 aa).

An N-acetylalanine modification is found at alanine 2. The residue at position 5 (serine 5) is a Phosphoserine. Residues 25-289 (FELVEVVGNG…EQLLKHPFIR (265 aa)) form the Protein kinase domain. ATP-binding positions include 31-39 (VGNGTYGQV) and lysine 53. The Proton acceptor role is filled by aspartate 152. Disordered stretches follow at residues 305-348 (IDRT…VPGE), 401-463 (QKEQ…VERE), and 489-805 (QAML…ETES). The span at 316–337 (DETEYEYSGSEEEEEEVPEQEG) shows a compositional bias: acidic residues. A phosphoserine mark is found at serine 323 and serine 325. A compositionally biased stretch (basic and acidic residues) spans 521-537 (PEPKPHYDPADRAREVQ). Position 543 is a phosphoserine (serine 543). Polar residues predominate over residues 544 to 559 (LKNNVSPVSRSHSFSD). 4 positions are modified to phosphoserine: serine 619, serine 621, serine 629, and serine 646. Residues 654 to 663 (LLWERVEKLV) show a composition bias toward basic and acidic residues. Residues 666–692 (PGSGSSSGSSNSGSQPGSHPGSQSGSG) show a composition bias toward low complexity. A phosphoserine mark is found at serine 691, serine 703, and serine 706. 2 stretches are compositionally biased toward basic and acidic residues: residues 713 to 726 (SAAK…EVFR) and 741 to 756 (KELR…HKVT). Acidic residues predominate over residues 766 to 781 (GTTDEEEEDVEQEGAD). A compositionally biased stretch (polar residues) spans 783–803 (STSGPEDTRAASSPNLSNGET). Residues serine 785, serine 794, serine 795, serine 799, and serine 817 each carry the phosphoserine modification. Threonine 822 bears the Phosphothreonine mark. Phosphoserine occurs at positions 846, 849, 894, and 907. The tract at residues 852-1206 (PFIDPRLLQI…LKFLCGRNDK (355 aa)) is mediates interaction with RAP2A. The CNH domain maps to 920-1207 (NSEILCAALW…KFLCGRNDKV (288 aa)).

It belongs to the protein kinase superfamily. STE Ser/Thr protein kinase family. STE20 subfamily. As to quaternary structure, interacts with the SH3 domain of the adapter proteins Nck. Interacts (via its CNH regulatory domain) with ATL1 (via the N-terminal region). Interacts with RAP2A (GTP-bound form preferentially). Requires Mg(2+) as cofactor. As to expression, appears to be ubiquitous, expressed in all tissue types examined. Highest levels observed in heart and brain.

It localises to the cytoplasm. The enzyme catalyses L-seryl-[protein] + ATP = O-phospho-L-seryl-[protein] + ADP + H(+). It carries out the reaction L-threonyl-[protein] + ATP = O-phospho-L-threonyl-[protein] + ADP + H(+). Serine/threonine kinase that plays a role in the response to environmental stress and cytokines such as TNF-alpha. Appears to act upstream of the JUN N-terminal pathway. Activator of the Hippo signaling pathway which plays a pivotal role in organ size control and tumor suppression by restricting proliferation and promoting apoptosis. MAP4Ks act in parallel to and are partially redundant with STK3/MST2 and STK4/MST2 in the phosphorylation and activation of LATS1/2, and establish MAP4Ks as components of the expanded Hippo pathway. Phosphorylates SMAD1 on Thr-322. The sequence is that of Mitogen-activated protein kinase kinase kinase kinase 4 (Map4k4) from Mus musculus (Mouse).